Here is a 2300-residue protein sequence, read N- to C-terminus: Protein hobbit (2300 aa).

A signal peptide spans 1-21; the sequence is MMLQLLLFCLALFIFVYWVLP. Positions 23-117 are transmembrane domain; that stretch reads GISWYLVKRF…LRRTQTLAGK (95 aa). Disordered regions lie at residues 269–290 and 2111–2148; these read TSTG…RSYD and VSDE…GKKG. Over residues 270–282 the composition is skewed to polar residues; the sequence is STGQPSRRSTQGL. Residues 1750–2300 form a required for endoplasmic reticulum-cell membrane contact sites location and binding to phosphatidylinositols region; sequence VVSETVGAFL…ASSGKRSGND (551 aa). A compositionally biased stretch (low complexity) spans 2119 to 2140; it reads ASTSSASTTNLQAKSSTSSSTK.

It localises to the cell membrane. It is found in the endoplasmic reticulum membrane. The protein localises to the mitochondrion membrane. Functionally, tube-forming lipid transport protein which binds to phosphatidylinositols and affects phosphatidylinositol-4,5-bisphosphate (PtdIns-4,5-P2) distribution. This Drosophila melanogaster (Fruit fly) protein is Protein hobbit.